The following is a 396-amino-acid chain: Phosphoglycerate kinase (396 aa).

Residues 20-22 (DIN), arginine 35, 58-61 (HQGR), arginine 115, and arginine 155 contribute to the substrate site. Residues glutamate 328 and 353–356 (GGDT) each bind ATP.

This sequence belongs to the phosphoglycerate kinase family. In terms of assembly, monomer.

It is found in the cytoplasm. It catalyses the reaction (2R)-3-phosphoglycerate + ATP = (2R)-3-phospho-glyceroyl phosphate + ADP. It participates in carbohydrate degradation; glycolysis; pyruvate from D-glyceraldehyde 3-phosphate: step 2/5. The sequence is that of Phosphoglycerate kinase from Natronomonas pharaonis (strain ATCC 35678 / DSM 2160 / CIP 103997 / JCM 8858 / NBRC 14720 / NCIMB 2260 / Gabara) (Halobacterium pharaonis).